The primary structure comprises 795 residues: Phenylalanine--tRNA ligase beta subunit (795 aa).

One can recognise a tRNA-binding domain in the interval 39–148; it reads AGSFHGVVVG…ADAPIGTDIR (110 aa). In terms of domain architecture, B5 spans 401–476; that stretch reads PKRATITLRR…RVYGYNNIPD (76 aa). Mg(2+) is bound by residues D454, D460, E463, and E464. In terms of domain architecture, FDX-ACB spans 701–794; sequence SRFPANRRDI…LKERFQASLR (94 aa).

Belongs to the phenylalanyl-tRNA synthetase beta subunit family. Type 1 subfamily. As to quaternary structure, tetramer of two alpha and two beta subunits. The cofactor is Mg(2+).

The protein resides in the cytoplasm. The enzyme catalyses tRNA(Phe) + L-phenylalanine + ATP = L-phenylalanyl-tRNA(Phe) + AMP + diphosphate + H(+). The sequence is that of Phenylalanine--tRNA ligase beta subunit from Escherichia coli O157:H7.